The chain runs to 156 residues: Snaclec A2 (156 aa).

A signal peptide spans methionine 1 to alanine 23. Cystine bridges form between cysteine 27/cysteine 38, cysteine 55/cysteine 154, and cysteine 129/cysteine 146. The 122-residue stretch at histidine 34–glutamate 155 folds into the C-type lectin domain.

Belongs to the snaclec family. Heterodimer; disulfide-linked. As to expression, expressed by the venom gland.

It is found in the secreted. Its function is as follows. Interferes with one step of hemostasis (modulation of platelet aggregation, or coagulation cascade, for example). This chain is Snaclec A2, found in Macrovipera lebetinus (Levantine viper).